We begin with the raw amino-acid sequence, 331 residues long: Glyceraldehyde-3-phosphate dehydrogenase (331 aa).

NAD(+) is bound by residues 12-13, Asp-34, Arg-78, and Thr-120; that span reads RI. D-glyceraldehyde 3-phosphate-binding positions include 149–151, Thr-180, 209–210, and Arg-232; these read SCT and TG. Catalysis depends on Cys-150, which acts as the Nucleophile. Asn-314 is a binding site for NAD(+).

It belongs to the glyceraldehyde-3-phosphate dehydrogenase family. In terms of assembly, homotetramer.

The protein localises to the cytoplasm. The enzyme catalyses D-glyceraldehyde 3-phosphate + phosphate + NAD(+) = (2R)-3-phospho-glyceroyl phosphate + NADH + H(+). The protein operates within carbohydrate degradation; glycolysis; pyruvate from D-glyceraldehyde 3-phosphate: step 1/5. In terms of biological role, catalyzes the oxidative phosphorylation of glyceraldehyde 3-phosphate (G3P) to 1,3-bisphosphoglycerate (BPG) using the cofactor NAD. The first reaction step involves the formation of a hemiacetal intermediate between G3P and a cysteine residue, and this hemiacetal intermediate is then oxidized to a thioester, with concomitant reduction of NAD to NADH. The reduced NADH is then exchanged with the second NAD, and the thioester is attacked by a nucleophilic inorganic phosphate to produce BPG. The protein is Glyceraldehyde-3-phosphate dehydrogenase (gapA) of Salmonella typhi.